Reading from the N-terminus, the 156-residue chain is Succinate dehydrogenase assembly factor 2-B, mitochondrial (156 aa).

The transit peptide at 1–24 (MLRQFIVSTVGRRLQLPMMAQSRL) directs the protein to the mitochondrion.

Belongs to the SDHAF2 family. In terms of assembly, interacts with the flavoprotein subunit within the SDH catalytic dimer.

It is found in the mitochondrion matrix. Functionally, plays an essential role in the assembly of succinate dehydrogenase (SDH), an enzyme complex (also referred to as respiratory complex II) that is a component of both the tricarboxylic acid (TCA) cycle and the mitochondrial electron transport chain, and which couples the oxidation of succinate to fumarate with the reduction of ubiquinone (coenzyme Q) to ubiquinol. Required for flavinylation (covalent attachment of FAD) of the flavoprotein subunit of the SDH catalytic dimer. The chain is Succinate dehydrogenase assembly factor 2-B, mitochondrial from Drosophila simulans (Fruit fly).